Reading from the N-terminus, the 457-residue chain is uncharacterized protein (457 aa).

Residues 5-63 (PVKKNDVIEVEIIDLTHEGLGVAKVDHYPLFIENALPGEKLEIKVLKTGKSFGYGKVLT) enclose the TRAM domain. Gln-287, Tyr-316, Glu-337, and Asp-385 together coordinate S-adenosyl-L-methionine. The active-site Nucleophile is Cys-412.

Belongs to the class I-like SAM-binding methyltransferase superfamily. RNA M5U methyltransferase family.

This is an uncharacterized protein from Enterococcus faecalis (strain ATCC 700802 / V583).